Consider the following 262-residue polypeptide: MNWKSYVFPGGHPPAALTTGLVVFLTAIYLLSFIFALREDLSLAPESLFKLQMSRLSLYPLIHLSLPHLLFNVLAIWAPLNLFEETHGTVYTGVFLNLSALFAGILYCLLGKLLYPEALVAGASGWCFTLFAYYSFKESQIRPRTRIFRTDYSIPTLYTPLVLLVAIAVVIPGSSFWGHFFGLCVGYAIGYKESWFNKITPPGWIITKIEKSLDGLIRLIPWGIKYYRDEDIDRTKDYEPLMSTETPLPLHNDNSGTVLGTA.

Residues 1-16 lie on the Cytoplasmic side of the membrane; it reads MNWKSYVFPGGHPPAA. The chain crosses the membrane as a helical span at residues 17 to 37; it reads LTTGLVVFLTAIYLLSFIFAL. Residues 38-57 lie on the Lumenal side of the membrane; sequence REDLSLAPESLFKLQMSRLS. A helical transmembrane segment spans residues 58-78; it reads LYPLIHLSLPHLLFNVLAIWA. Residues 79 to 89 are Cytoplasmic-facing; sequence PLNLFEETHGT. A helical membrane pass occupies residues 90 to 110; the sequence is VYTGVFLNLSALFAGILYCLL. Residues 111–112 lie on the Lumenal side of the membrane; it reads GK. The chain crosses the membrane as a helical span at residues 113-133; sequence LLYPEALVAGASGWCFTLFAY. Residue Ser124 is the Nucleophile of the active site. Over 134 to 151 the chain is Cytoplasmic; that stretch reads YSFKESQIRPRTRIFRTD. Residues 152-168 form a helical membrane-spanning segment; the sequence is YSIPTLYTPLVLLVAIA. Residues 169 to 174 are Lumenal-facing; it reads VVIPGS. The chain crosses the membrane as a helical span at residues 175–191; the sequence is SFWGHFFGLCVGYAIGY. Residue His179 is part of the active site. Over 192 to 262 the chain is Cytoplasmic; that stretch reads KESWFNKITP…DNSGTVLGTA (71 aa). The segment at 243 to 262 is disordered; sequence STETPLPLHNDNSGTVLGTA. Positions 252–262 are enriched in polar residues; the sequence is NDNSGTVLGTA.

This sequence belongs to the peptidase S54 family. In terms of assembly, interacts with SNX3.

Its subcellular location is the golgi apparatus membrane. It is found in the golgi apparatus. The protein resides in the cis-Golgi network membrane. It carries out the reaction Cleaves type-1 transmembrane domains using a catalytic dyad composed of serine and histidine that are contributed by different transmembrane domains.. Functionally, probable rhomboid-type serine protease that catalyzes intramembrane proteolysis. The chain is Rhomboid-type serine protease 2 (RBD2) from Saccharomyces cerevisiae (strain ATCC 204508 / S288c) (Baker's yeast).